A 290-amino-acid polypeptide reads, in one-letter code: MNFKLKNLRLSRLNQEKSSSVTSFFFIQELFVLVKRLFIQLKRRPITLISGILQPLLWLILFGALFQKAPFRISNLENNYLQFFYPGILVFTAFAGSLNSSLPLIFDREFGFLNRLLVAPLNSRFSILFSSAFFISVLSFIQVFFIMLFGVFLGIQLPPFKSLIVSFFFLFLLIIGITTFSILLALLLPTHIELIAVIFVLNLPLLFSSTALAPLDFMPSWLQIISCLNPLTYTIEPIRFLYSHSSWLFSSSLFELSFFSINIGQSLIILIIFDLVGFLLFKKILKSIFI.

7 helical membrane-spanning segments follow: residues 21–41, 46–66, 86–106, 133–153, 167–187, 194–213, and 261–281; these read VTSFFFIQELFVLVKRLFIQL, ITLISGILQPLLWLILFGALF, PGILVFTAFAGSLNSSLPLIF, FFISVLSFIQVFFIMLFGVFL, FFFLFLLIIGITTFSILLALL, LIAVIFVLNLPLLFSSTALA, and INIGQSLIILIIFDLVGFLLF. The 239-residue stretch at 46–284 folds into the ABC transmembrane type-2 domain; the sequence is ITLISGILQP…LVGFLLFKKI (239 aa).

This sequence belongs to the ABC-2 integral membrane protein family.

The protein resides in the plastid. The protein localises to the cyanelle membrane. In Cyanophora paradoxa, this protein is Putative transport permease ycf38 (ycf38).